A 394-amino-acid polypeptide reads, in one-letter code: N-acetylgalactosamine-6-phosphate deacetylase (394 aa).

Glutamate 137 lines the Zn(2+) pocket. 148–149 is a binding site for substrate; it reads CH. 2 residues coordinate Zn(2+): histidine 201 and histidine 222. Substrate contacts are provided by residues 225–226, arginine 233, and 254–257; these read NG and DGQH. Catalysis depends on aspartate 280, which acts as the Proton donor/acceptor. 313–315 is a binding site for substrate; sequence LAG.

It belongs to the metallo-dependent hydrolases superfamily. NagA family.

The protein resides in the cytoplasm. The catalysed reaction is N-acetyl-D-galactosamine 6-phosphate + H2O = D-galactosamine 6-phosphate + acetate. The enzyme catalyses N-acetyl-D-glucosamine 6-phosphate + H2O = D-glucosamine 6-phosphate + acetate. Functionally, involved in the pathway of N-acetyl-D-galactosamine degradation. Catalyzes the conversion of N-acetyl-D-galactosamine 6-phosphate to D-galactosamine 6-phosphate and acetate. It can also catalyze the conversion of N-acetyl-D-glucosamine 6-phosphate. The protein is N-acetylgalactosamine-6-phosphate deacetylase of Shewanella sp. (strain ANA-3).